The following is a 449-amino-acid chain: Phosphoglucosamine mutase (449 aa).

The active-site Phosphoserine intermediate is the Ser-101. Residues Ser-101, Asp-242, Asp-244, and Asp-246 each contribute to the Mg(2+) site. The residue at position 101 (Ser-101) is a Phosphoserine.

This sequence belongs to the phosphohexose mutase family. Requires Mg(2+) as cofactor. Activated by phosphorylation.

It catalyses the reaction alpha-D-glucosamine 1-phosphate = D-glucosamine 6-phosphate. Its function is as follows. Catalyzes the conversion of glucosamine-6-phosphate to glucosamine-1-phosphate. This is Phosphoglucosamine mutase from Methylocella silvestris (strain DSM 15510 / CIP 108128 / LMG 27833 / NCIMB 13906 / BL2).